The following is a 484-amino-acid chain: ATP synthase subunit beta (484 aa).

152–159 (GGAGVGKT) contributes to the ATP binding site.

Belongs to the ATPase alpha/beta chains family. As to quaternary structure, F-type ATPases have 2 components, CF(1) - the catalytic core - and CF(0) - the membrane proton channel. CF(1) has five subunits: alpha(3), beta(3), gamma(1), delta(1), epsilon(1). CF(0) has three main subunits: a(1), b(2) and c(9-12). The alpha and beta chains form an alternating ring which encloses part of the gamma chain. CF(1) is attached to CF(0) by a central stalk formed by the gamma and epsilon chains, while a peripheral stalk is formed by the delta and b chains.

The protein resides in the cell inner membrane. The enzyme catalyses ATP + H2O + 4 H(+)(in) = ADP + phosphate + 5 H(+)(out). Functionally, produces ATP from ADP in the presence of a proton gradient across the membrane. The catalytic sites are hosted primarily by the beta subunits. The chain is ATP synthase subunit beta from Campylobacter lari (strain RM2100 / D67 / ATCC BAA-1060).